We begin with the raw amino-acid sequence, 687 residues long: Dentin sialophosphoprotein (687 aa).

A signal peptide spans 1 to 17 (MKTKIIIYICIWATAWA). Residues 54-113 (NNATNDDSPKGSELGRQVHSNGGYERDRNGSESIAVGGKSSPTQPILANAQGNSAKERED) are disordered. Asparagine 55 carries an N-linked (GlcNAc...) asparagine glycan. Threonine 57 is modified (phosphothreonine; by CK2). The N-linked (GlcNAc...) asparagine glycan is linked to asparagine 82. Over residues 93 to 107 (SSPTQPILANAQGNS) the composition is skewed to polar residues. Asparagine 128 carries N-linked (GlcNAc...) asparagine glycosylation. The segment covering 146-160 (EAKESKVHGQPHQDT) has biased composition (basic and acidic residues). The disordered stretch occupies residues 146–687 (EAKESKVHGQ…SDSNHSTSDD (542 aa)). Residues 161–194 (KTGLASDTSQNGDATLVQENEPQVAGSKNSTNHE) show a composition bias toward polar residues. The N-linked (GlcNAc...) asparagine glycan is linked to asparagine 189. Serine 226 carries the post-translational modification Phosphoserine; by CK2. Residue serine 253 is modified to Phosphoserine; by CK1. Basic and acidic residues predominate over residues 262–275 (GDGRESHDGTEGHE). The segment covering 276–292 (GQSSGGNNDNRGQGSVS) has biased composition (polar residues). Position 278 is a phosphoserine; by CK1 (serine 278). Phosphoserine; by CK2 is present on serine 292. Phosphoserine; by CK1 is present on serine 298. Asparagine 312 is a glycosylation site (N-linked (GlcNAc...) asparagine). At serine 315 the chain carries Phosphoserine; by CK2. Residues threonine 319 and threonine 329 each carry the phosphothreonine; by CK2 modification. Residues serine 337 and serine 345 each carry the phosphoserine; by CK2 modification. Residues 352–375 (SGQSQNQGLETEGSSTGNKSSITK) are compositionally biased toward polar residues. Serine 366 is modified (phosphoserine; by CK1). Asparagine 369 is a glycosylation site (N-linked (GlcNAc...) asparagine). A compositionally biased stretch (basic and acidic residues) spans 386 to 417 (SNGHHGMELDKRNSPKQGESDKPQGAAEKSDT). Over residues 418-432 (HNNMGHSRIGSSSNS) the composition is skewed to polar residues. The segment covering 447 to 460 (GDDPNSSDESNGSD) has biased composition (low complexity). Acidic residues predominate over residues 500–521 (DDSSDDTSDTDDSDSNGDDDSE). The span at 522–545 (SKDKDESDNSNHDNDSDSESKSDS) shows a compositional bias: basic and acidic residues. Low complexity predominate over residues 555 to 598 (SSDSSDSSDSSETSDSSDSSDTSDSSDSSDSSDSSNSSDTSDSS). The segment covering 599 to 617 (DSSDGDSSDGDSSDSDSSD) has biased composition (acidic residues). Residues 618 to 639 (SDSSNSSDSDSSDSSDSSSSDS) are compositionally biased toward low complexity. Positions 667–677 (SDSDSDSDSEG) are enriched in acidic residues. Residues 678–687 (SDSNHSTSDD) are compositionally biased toward low complexity.

As to quaternary structure, interacts with FBLN7. DSP is glycosylated. Specifically expressed in teeth, mainly in odontoblasts and transiently in pre-ameloblasts.

It is found in the secreted. The protein resides in the extracellular space. The protein localises to the extracellular matrix. In terms of biological role, DSP may be an important factor in dentinogenesis. DPP may bind high amount of calcium and facilitate initial mineralization of dentin matrix collagen as well as regulate the size and shape of the crystals. The chain is Dentin sialophosphoprotein (Dspp) from Rattus norvegicus (Rat).